The sequence spans 140 residues: Profilin (140 aa).

N-acetylserine is present on Ser2.

Belongs to the profilin family. Occurs in many kinds of cells as a complex with monomeric actin in a 1:1 ratio.

Its subcellular location is the cytoplasm. The protein resides in the cytoskeleton. In terms of biological role, binds to actin and affects the structure of the cytoskeleton. At high concentrations, profilin prevents the polymerization of actin, whereas it enhances it at low concentrations. By binding to PIP2, it inhibits the formation of IP3 and DG. The sequence is that of Profilin from Heliocidaris crassispina (Sea urchin).